The sequence spans 101 residues: MAKQSMIARDVKRAKLADKFYEKREELKKVISDVNTSDEERWAAVLKLQTLPRDSSPVRQRNRCRQTGRPHGVLRKFGLSRIKVREAAMRGEIPGLKKASW.

Belongs to the universal ribosomal protein uS14 family. As to quaternary structure, part of the 30S ribosomal subunit. Contacts proteins S3 and S10.

Functionally, binds 16S rRNA, required for the assembly of 30S particles and may also be responsible for determining the conformation of the 16S rRNA at the A site. This Histophilus somni (strain 2336) (Haemophilus somnus) protein is Small ribosomal subunit protein uS14.